Reading from the N-terminus, the 600-residue chain is Glutamine--fructose-6-phosphate aminotransferase [isomerizing] (600 aa).

Catalysis depends on Cys-2, which acts as the Nucleophile; for GATase activity. Positions Cys-2–Asp-217 constitute a Glutamine amidotransferase type-2 domain. SIS domains are found at residues Ile-283–Lys-422 and Ile-452–Pro-590. Lys-595 acts as the For Fru-6P isomerization activity in catalysis.

As to quaternary structure, homodimer.

Its subcellular location is the cytoplasm. It catalyses the reaction D-fructose 6-phosphate + L-glutamine = D-glucosamine 6-phosphate + L-glutamate. Its function is as follows. Catalyzes the first step in hexosamine metabolism, converting fructose-6P into glucosamine-6P using glutamine as a nitrogen source. The sequence is that of Glutamine--fructose-6-phosphate aminotransferase [isomerizing] from Shouchella clausii (strain KSM-K16) (Alkalihalobacillus clausii).